The sequence spans 125 residues: MLSRLLKEHQAKQNERKELQEKRRREAIAAATCLTEALVDHLNVGVAQAYMNQRKLDHEVKTLQVQAAQFAKQTGQWIGMVENFNQALKEIGDVENWARSIELDMRTIATALEYVYKGQLQSAPS.

Positions 1-31 (MLSRLLKEHQAKQNERKELQEKRRREAIAAA) form a coiled coil.

The protein belongs to the BLOC1S1 family. In terms of assembly, component of the biogenesis of lysosome-related organelles complex 1 (BLOC-1) composed of BLOC1S1, BLOC1S2, BLOC1S3, BLOC1S4, BLOC1S5, BLOC1S6, DTNBP1/BLOC1S7 and SNAPIN/BLOC1S8. Octamer composed of one copy each BLOC1S1, BLOC1S2, BLOC1S3, BLOC1S4, BLOC1S5, BLOC1S6, DTNBP1/BLOC1S7 and SNAPIN/BLOC1S8. The BLOC-1 complex associates with the AP-3 protein complex and membrane protein cargos. Interacts with ATP5F1A and NDUFA9; involved in their acetylation on lysine residues. Interacts with KXD1.

The protein resides in the mitochondrion intermembrane space. Its subcellular location is the mitochondrion matrix. It is found in the cytoplasm. It localises to the cytosol. The protein localises to the lysosome membrane. It catalyses the reaction L-lysyl-[protein] + acetyl-CoA = N(6)-acetyl-L-lysyl-[protein] + CoA + H(+). Functionally, component of the BLOC-1 complex, a complex that is required for normal biogenesis of lysosome-related organelles (LRO), such as platelet dense granules and melanosomes. In concert with the AP-3 complex, the BLOC-1 complex is required to target membrane protein cargos into vesicles assembled at cell bodies for delivery into neurites and nerve terminals. The BLOC-1 complex, in association with SNARE proteins, is also proposed to be involved in neurite extension. As part of the BORC complex may play a role in lysosomes movement and localization at the cell periphery. The BORC complex is most probably associated with the cytosolic face of lysosomes, may recruit ARL8B and couple lysosomes to microtubule plus-end-directed kinesin motor. Its function is as follows. Acts as a protein acetyltransferase. Negatively regulates aerobic respiration through mitochondrial protein lysine-acetylation. May counteract the action of the deacetylase SIRT3 by acetylating and regulating proteins of the mitochondrial respiratory chain including ATP5F1A and NDUFA9. Acts as a regulator of mTORC2 signaling in response to hypotoxic stress by mediating acetylation of RICTOR, thereby protecting RICTOR against ubiquitination and subsequent degradation by the proteasome. The chain is Biogenesis of lysosome-related organelles complex 1 subunit 1 (Bloc1s1) from Mus musculus (Mouse).